Here is a 311-residue protein sequence, read N- to C-terminus: MSVKVKDLLKMSRLSQEYGDKVLLEKEIKTSDISRPGLEMTGYFDFYTPERIQLIGMKEWSYLMKMSSHNRHQVLLKMFQPETPVVIIARNLEIPKEMIDAADEKQVAILRSKASTSRLSGEISSYLDSRLAERTSVHGVLMDIYGMGVLIQGDSGIGKSETGLELVKRGHRLVADDRVDIYAKDEVTLWGEPAEILRHLLEIRGVGIIDVMSLYGASAVKDSSQVQIAVYLENYDTQKTFDRLGNDTEELEVAGVRIPRIRIPVKTGRNISVVIEAAAMNYRAKQMGYDATKIFEERLTDLISRNEVKHD.

Active-site residues include histidine 138 and lysine 159. 153–160 (GDSGIGKS) contributes to the ATP binding site. Residue serine 160 coordinates Mg(2+). The Proton acceptor; for phosphorylation activity. Proton donor; for dephosphorylation activity role is filled by aspartate 177. Positions 201-210 (LEIRGVGIID) are important for the catalytic mechanism of both phosphorylation and dephosphorylation. Glutamate 202 serves as a coordination point for Mg(2+). Arginine 243 is an active-site residue. The segment at 264–269 (PVKTGR) is important for the catalytic mechanism of dephosphorylation.

This sequence belongs to the HPrK/P family. In terms of assembly, homohexamer. The cofactor is Mg(2+).

The catalysed reaction is [HPr protein]-L-serine + ATP = [HPr protein]-O-phospho-L-serine + ADP + H(+). The enzyme catalyses [HPr protein]-O-phospho-L-serine + phosphate + H(+) = [HPr protein]-L-serine + diphosphate. Its function is as follows. Catalyzes the ATP- as well as the pyrophosphate-dependent phosphorylation of a specific serine residue in HPr, a phosphocarrier protein of the phosphoenolpyruvate-dependent sugar phosphotransferase system (PTS). HprK/P also catalyzes the pyrophosphate-producing, inorganic phosphate-dependent dephosphorylation (phosphorolysis) of seryl-phosphorylated HPr (P-Ser-HPr). The two antagonistic activities of HprK/P are regulated by several intracellular metabolites, which change their concentration in response to the absence or presence of rapidly metabolisable carbon sources (glucose, fructose, etc.) in the growth medium. Therefore, by controlling the phosphorylation state of HPr, HPrK/P is a sensor enzyme that plays a major role in the regulation of carbon metabolism and sugar transport: it mediates carbon catabolite repression (CCR), and regulates PTS-catalyzed carbohydrate uptake and inducer exclusion. The protein is HPr kinase/phosphorylase of Streptococcus sanguinis (strain SK36).